Reading from the N-terminus, the 276-residue chain is Protein TabB (276 aa).

It belongs to the transferase hexapeptide repeat family. Requires pyridoxal 5'-phosphate as cofactor.

The polypeptide is Protein TabB (tabB) (Pseudomonas amygdali pv. tabaci (Pseudomonas syringae pv. tabaci)).